Here is a 343-residue protein sequence, read N- to C-terminus: Glycerol-3-phosphate dehydrogenase [NAD(P)+] (343 aa).

NADPH-binding residues include Ser11, Trp12, Arg32, and Lys106. Residues Lys106, Gly137, and Ser139 each contribute to the sn-glycerol 3-phosphate site. Ala141 contacts NADPH. Lys192, Asp245, Ser255, Arg256, and Asn257 together coordinate sn-glycerol 3-phosphate. Lys192 serves as the catalytic Proton acceptor. Arg256 is a binding site for NADPH. Positions 280 and 282 each coordinate NADPH.

The protein belongs to the NAD-dependent glycerol-3-phosphate dehydrogenase family.

It localises to the cytoplasm. The enzyme catalyses sn-glycerol 3-phosphate + NAD(+) = dihydroxyacetone phosphate + NADH + H(+). The catalysed reaction is sn-glycerol 3-phosphate + NADP(+) = dihydroxyacetone phosphate + NADPH + H(+). The protein operates within membrane lipid metabolism; glycerophospholipid metabolism. Its function is as follows. Catalyzes the reduction of the glycolytic intermediate dihydroxyacetone phosphate (DHAP) to sn-glycerol 3-phosphate (G3P), the key precursor for phospholipid synthesis. This chain is Glycerol-3-phosphate dehydrogenase [NAD(P)+], found in Syntrophomonas wolfei subsp. wolfei (strain DSM 2245B / Goettingen).